Consider the following 299-residue polypeptide: Tyrosine recombinase XerC (299 aa).

In terms of domain architecture, Core-binding (CB) spans 1-81; sequence MDEAIRRFIE…SWRQFYHWLQ (81 aa). A Tyr recombinase domain is found at 102-281; that stretch reads LLPKALPVDG…DFQHLAKVYD (180 aa). Catalysis depends on residues Arg-142, Lys-166, His-233, Arg-236, and His-259. Residue Tyr-268 is the O-(3'-phospho-DNA)-tyrosine intermediate of the active site.

The protein belongs to the 'phage' integrase family. XerC subfamily. In terms of assembly, forms a cyclic heterotetrameric complex composed of two molecules of XerC and two molecules of XerD.

It is found in the cytoplasm. In terms of biological role, site-specific tyrosine recombinase, which acts by catalyzing the cutting and rejoining of the recombining DNA molecules. The XerC-XerD complex is essential to convert dimers of the bacterial chromosome into monomers to permit their segregation at cell division. It also contributes to the segregational stability of plasmids. In Chromobacterium violaceum (strain ATCC 12472 / DSM 30191 / JCM 1249 / CCUG 213 / NBRC 12614 / NCIMB 9131 / NCTC 9757 / MK), this protein is Tyrosine recombinase XerC.